Reading from the N-terminus, the 431-residue chain is tRNA(Ile)-lysidine synthase (431 aa).

26–31 (SGGIDS) lines the ATP pocket.

This sequence belongs to the tRNA(Ile)-lysidine synthase family.

The protein localises to the cytoplasm. The catalysed reaction is cytidine(34) in tRNA(Ile2) + L-lysine + ATP = lysidine(34) in tRNA(Ile2) + AMP + diphosphate + H(+). Its function is as follows. Ligates lysine onto the cytidine present at position 34 of the AUA codon-specific tRNA(Ile) that contains the anticodon CAU, in an ATP-dependent manner. Cytidine is converted to lysidine, thus changing the amino acid specificity of the tRNA from methionine to isoleucine. The chain is tRNA(Ile)-lysidine synthase from Wolbachia sp. subsp. Brugia malayi (strain TRS).